Consider the following 186-residue polypeptide: Interferon lambda-3 (186 aa).

Positions 1 to 21 (MVCYGVTIILVGTLGSLLVGA) are cleaved as a signal peptide. 3 disulfides stabilise this stretch: C31–C128, C65–C160, and C178–C185.

The protein belongs to the lambda interferon family.

The protein localises to the secreted. Cytokine which plays a critical role in the antiviral host defense, predominantly in the epithelial tissues. Acts as a ligand for the heterodimeric class II cytokine receptor composed of IL10RB and IFNLR1, and receptor engagement leads to the activation of the JAK/STAT signaling pathway resulting in the expression of IFN-stimulated genes (ISG), which mediate the antiviral state. Has a restricted receptor distribution and therefore restricted targets: is primarily active in epithelial cells and this cell type-selective action is because of the epithelial cell-specific expression of its receptor IFNLR1. Exhibits antiviral activity against the H5N1 influenza A virus. Induces the expression of the antiviral MX protein in epithelial-rich tissues, such as intestine, trachea and lung. This Gallus gallus (Chicken) protein is Interferon lambda-3 (IFNL3).